Consider the following 741-residue polypeptide: Methionine--tRNA ligase (741 aa).

Residues 1-22 are compositionally biased toward polar residues; sequence MTMKQYTMSKMNAETQTQTRES. A disordered region spans residues 1 to 25; that stretch reads MTMKQYTMSKMNAETQTQTRESFPT. The short motif at 36-46 is the 'HIGH' region element; sequence PYANGDLHIGH. 4 residues coordinate Zn(2+): Cys167, Cys170, Cys179, and Cys183. The tract at residues 309 to 329 is disordered; the sequence is VRSHSSSSAKDSSEGNSPSNI. Low complexity predominate over residues 311–329; that stretch reads SHSSSSAKDSSEGNSPSNI. Position 381 (Thr381) interacts with ATP. Residues 591–629 form a disordered region; it reads KLADRVTDPTDDDDSDTDTETGTDVAETTNESHSESNMT. The segment covering 599-611 has biased composition (acidic residues); that stretch reads PTDDDDSDTDTET. The span at 616-629 shows a compositional bias: polar residues; it reads AETTNESHSESNMT. The tRNA-binding domain occupies 643–741; it reads EFEELDLRVA…EDADPGTSIQ (99 aa).

Belongs to the class-I aminoacyl-tRNA synthetase family. MetG type 1 subfamily. Homodimer. The cofactor is Zn(2+).

The protein localises to the cytoplasm. It carries out the reaction tRNA(Met) + L-methionine + ATP = L-methionyl-tRNA(Met) + AMP + diphosphate. In terms of biological role, is required not only for elongation of protein synthesis but also for the initiation of all mRNA translation through initiator tRNA(fMet) aminoacylation. The sequence is that of Methionine--tRNA ligase from Haloquadratum walsbyi (strain DSM 16790 / HBSQ001).